Here is a 140-residue protein sequence, read N- to C-terminus: T cell receptor alpha chain constant (140 aa).

One can recognise an Ig-like C1-type domain in the interval 19–107 (KSVCLFTDFD…LVEKSFETDT (89 aa)). A disulfide bridge links Cys22 with Cys72. 4 N-linked (GlcNAc...) asparagine glycosylation sites follow: Asn32, Asn66, Asn77, and Asn113. Residues 94–115 (CDVKLVEKSFETDTNLNFQNLS) form a connecting peptide region. Residues 116-138 (VIGFRILLLKVAGFNLLMTLRLW) traverse the membrane as a helical segment. The Cytoplasmic segment spans residues 139 to 140 (SS).

As to quaternary structure, alpha-beta TR is a heterodimer composed of an alpha and beta chain; disulfide-linked. The alpha-beta TR is associated with the transmembrane signaling CD3 coreceptor proteins to form the TR-CD3 (TcR or TCR). The assembly of alpha-beta TR heterodimers with CD3 occurs in the endoplasmic reticulum where a single alpha-beta TR heterodimer associates with one CD3D-CD3E heterodimer, one CD3G-CD3E heterodimer and one CD247 homodimer forming a stable octameric structure. CD3D-CD3E and CD3G-CD3E heterodimers preferentially associate with TR alpha and TR beta chains, respectively. The association of the CD247 homodimer is the last step of TcR assembly in the endoplasmic reticulum and is required for transport to the cell surface.

Its subcellular location is the cell membrane. Its function is as follows. Constant region of T cell receptor (TR) alpha chain. Alpha-beta T cell receptors are antigen specific receptors which are essential to the immune response and are present on the cell surface of T lymphocytes. Recognize peptide-major histocompatibility (MH) (pMH) complexes that are displayed by antigen presenting cells (APC), a prerequisite for efficient T cell adaptive immunity against pathogens. Binding of alpha-beta TR to pMH complex initiates TR-CD3 clustering on the cell surface and intracellular activation of LCK that phosphorylates the ITAM motifs of CD3G, CD3D, CD3E and CD247 enabling the recruitment of ZAP70. In turn, ZAP70 phosphorylates LAT, which recruits numerous signaling molecules to form the LAT signalosome. The LAT signalosome propagates signal branching to three major signaling pathways, the calcium, the mitogen-activated protein kinase (MAPK) kinase and the nuclear factor NF-kappa-B (NF-kB) pathways, leading to the mobilization of transcription factors that are critical for gene expression and essential for T cell growth and differentiation. The T cell repertoire is generated in the thymus, by V-(D)-J rearrangement. This repertoire is then shaped by intrathymic selection events to generate a peripheral T cell pool of self-MH restricted, non-autoaggressive T cells. Post-thymic interaction of alpha-beta TR with the pMH complexes shapes TR structural and functional avidity. In Homo sapiens (Human), this protein is T cell receptor alpha chain constant.